Reading from the N-terminus, the 332-residue chain is MNDTLSSFLNRNEALGLNPPHGLDMHITKRGSDWLWAVFAVFGFILLCYVVMFFIAENKGSRLTRYALAPAFLITFFEFFAFFTYASDLGWTGVQAEFNHVKVSKSITGEVPGIRQIFYSKYIAWFLSWPCLLFLIELAASTTGENDDISALDMVHSLLIQIVGTLFWVVSLLVGSLIKSTYKWGYYTIGAVAMLVTQGVICQRQFFNLKTRGFNALMLCTCMVIVWLYFICWGLSDGGNRIQPDGEAIFYGVLDLCVFAIYPCYLLIAVSRDGKLPRLSLTGGFSHHHATDDVEDAAPETKEAVPESPRASGETAIHEPEPEAEQAVEDTA.

At 1–34 (MNDTLSSFLNRNEALGLNPPHGLDMHITKRGSDW) the chain is on the extracellular side. Residues 35 to 55 (LWAVFAVFGFILLCYVVMFFI) traverse the membrane as a helical segment. Over 56–65 (AENKGSRLTR) the chain is Cytoplasmic. The chain crosses the membrane as a helical span at residues 66–86 (YALAPAFLITFFEFFAFFTYA). Topologically, residues 87 to 121 (SDLGWTGVQAEFNHVKVSKSITGEVPGIRQIFYSK) are extracellular. A helical transmembrane segment spans residues 122 to 142 (YIAWFLSWPCLLFLIELAAST). The Cytoplasmic portion of the chain corresponds to 143 to 157 (TGENDDISALDMVHS). Residues 158–178 (LLIQIVGTLFWVVSLLVGSLI) traverse the membrane as a helical segment. Residues 179-181 (KST) lie on the Extracellular side of the membrane. Residues 182–202 (YKWGYYTIGAVAMLVTQGVIC) form a helical membrane-spanning segment. The Cytoplasmic segment spans residues 203–215 (QRQFFNLKTRGFN). The chain crosses the membrane as a helical span at residues 216–236 (ALMLCTCMVIVWLYFICWGLS). Residues 237–248 (DGGNRIQPDGEA) lie on the Extracellular side of the membrane. Residues 249–269 (IFYGVLDLCVFAIYPCYLLIA) form a helical membrane-spanning segment. The Cytoplasmic portion of the chain corresponds to 270-332 (VSRDGKLPRL…EAEQAVEDTA (63 aa)). The disordered stretch occupies residues 290–332 (ATDDVEDAAPETKEAVPESPRASGETAIHEPEPEAEQAVEDTA). The residue at position 308 (Ser308) is a Phosphoserine. Positions 322–332 (PEAEQAVEDTA) are enriched in acidic residues. Thr331 is modified (phosphothreonine).

This sequence belongs to the archaeal/bacterial/fungal opsin family.

The protein localises to the membrane. Probably cooperates with other heat shock proteins in the translocation of polypeptides through membranes. It may counteract the altering effect of heat shock on the plasma membrane. In Saccharomyces cerevisiae (strain ATCC 204508 / S288c) (Baker's yeast), this protein is 30 kDa heat shock protein (HSP30).